The sequence spans 688 residues: MTHKQRAIFEPALVRTALLDAVKKLDPRVQWRNPVMFVVYLGSWLTTLIWLAILSGHTTGSAMFTGSIALWLWFTVLFANMAEALAEGRSKAQAASLRGVKKTSWAKKLSEARVDAPQEKVSADSLRKGDLVLIEAGDTVPCDGEVLEGGASVDESAITGESAPVIRESGGDFSSVTGGTRVLSDWLVVECRVNPGETFLDRMIAMVEGAKRRKTPNEVALTILLVALTIVFLLATATLYPFSVFSVEASQAGSPVTITVLVALLVCLIPTTIGGLLSAIGVAGMSRMLGANVIATSGRAVEAAGDVDVLLLDKTGTITLGNRQASEFLPAPGVTEQQLADAAQLSSLADETPEGRSIVVLAKQRFNLRERDLHSLNATFIPFSAQTRMSGVNVQERMIRKGAVDAIRRHVESNQGHFPPAVDDLVASVARTGGTPLVVAEGSRVLGVVALKDIVKGGIKERFAELRKMGIKTVMITGDNRLTAAAIAAEAGVDDFLAEATPEAKLALIRQYQAEGRLVAMTGDGTNDAPALAQADVAVAMNSGTQAAKEAGNMVDLDSNPTKLIEVVHIGKQMLMTRGSLTTFSIANDVAKYFAIIPAAFAATYPQLNALNIMQLHSPSSAILSAVIFNALVIVFLIPLALKGVSYKAMSAAALLRRNLWIYGLGGLLVPFVGIKLIDLLLTALNMG.

Transmembrane regions (helical) follow at residues 34–54, 62–82, 219–239, and 260–280; these read PVMFVVYLGSWLTTLIWLAIL, AMFTGSIALWLWFTVLFANMA, VALTILLVALTIVFLLATATL, and VLVALLVCLIPTTIGGLLSAI. Aspartate 313 acts as the 4-aspartylphosphate intermediate in catalysis. Residues aspartate 350, glutamate 354, 383-390, and lysine 401 contribute to the ATP site; that span reads FSAQTRMS. Positions 524 and 528 each coordinate Mg(2+). The next 3 membrane-spanning stretches (helical) occupy residues 594 to 614, 622 to 642, and 662 to 682; these read FAIIPAAFAATYPQLNALNIM, AILSAVIFNALVIVFLIPLAL, and IYGLGGLLVPFVGIKLIDLLL.

The protein belongs to the cation transport ATPase (P-type) (TC 3.A.3) family. Type IA subfamily. The system is composed of three essential subunits: KdpA, KdpB and KdpC.

Its subcellular location is the cell inner membrane. It catalyses the reaction K(+)(out) + ATP + H2O = K(+)(in) + ADP + phosphate + H(+). Its function is as follows. Part of the high-affinity ATP-driven potassium transport (or Kdp) system, which catalyzes the hydrolysis of ATP coupled with the electrogenic transport of potassium into the cytoplasm. This subunit is responsible for energy coupling to the transport system and for the release of the potassium ions to the cytoplasm. In Yersinia pseudotuberculosis serotype I (strain IP32953), this protein is Potassium-transporting ATPase ATP-binding subunit.